The sequence spans 2544 residues: DNA polymerase theta (2544 aa).

Residues Met1–Ser13 are compositionally biased toward basic residues. Residues Met1–Lys57 form a disordered region. Residues Ser14 to Ser29 are compositionally biased toward low complexity. ATP contacts are provided by residues Gln95 and Ala114–Thr121. The Helicase ATP-binding domain occupies Leu101 to Asp285. Positions Leu101–Ala551 are helicase activity. The short motif at Asp215–His218 is the DEAH box element. The 232-residue stretch at Gly320–Ala551 folds into the Helicase C-terminal domain. The segment at Asp844–Met890 is interaction with RAD51. Positions Pro896–Asp955 are disordered. Positions Ser898–Ser911 are enriched in low complexity. Residues Gly933 to Lys945 show a composition bias toward polar residues. The span at Pro946–Asp955 shows a compositional bias: basic and acidic residues. Lys983 bears the N6-acetyllysine mark. Polar residues predominate over residues Leu1022–Pro1034. Disordered regions lie at residues Leu1022 to Arg1058 and Val1128 to Leu1167. The span at Val1128–Ala1139 shows a compositional bias: low complexity. Positions Ala1140–Asn1155 are enriched in basic and acidic residues. The residue at position 1265 (Ser1265) is a Phosphoserine. 2 disordered regions span residues Gly1266–Ala1288 and Gln1331–Asp1353. A phosphoserine mark is found at Ser1438, Ser1442, Ser1444, and Ser1449. The interval Phe1478–Gln1501 is disordered. Residues Pro1492–Gln1501 are compositionally biased toward polar residues. A phosphoserine mark is found at Ser1511, Ser1519, Ser1585, and Ser1592. Residues Glu1557–Ala1591 form a disordered region. Residues Thr1578–Ala1591 show a composition bias toward polar residues. Basic and acidic residues-rich tracts occupy residues Val1606–Lys1616 and Asn1628–Ile1638. The tract at residues Val1606 to Ala1697 is disordered. Polar residues predominate over residues Asp1641–Pro1652. Residues Val1656–Ala1667 are compositionally biased toward basic and acidic residues. At Thr1710 the chain carries Phosphothreonine. Positions Ala2052 to Glu2538 are DNA polymerase activity. 2 loop regions span residues Lys2097–Phe2132 and Glu2212–Pro2276. Polar residues predominate over residues Met2104–Arg2117. Positions Met2104–Arg2124 are disordered. The active-site For DNA polymerase activity is Asp2284. Mg(2+)-binding residues include Asp2284 and Tyr2285. Positions Gln2445–Ile2489 are loop 3. Residue Asp2494 participates in Mg(2+) binding.

Belongs to the DNA polymerase type-A family. As to quaternary structure, homomultimer; forms homodimers and homotetramers. Interacts with RAD51. Interacts with ORC2 and ORC4. Interacts with RHNO1; interaction takes place during mitosis and promotes POLQ recruitment to DNA damage sites. Interacts (when phosphorylated) with TOPBP1 (via BRCT domains 7 and 8); promoting POLQ recruitment to DNA damage sites. It depends on Mg(2+) as a cofactor. Post-translationally, phosphorylated by PLK1; promoting interaction with TOPBP1 and recruitment to DNA damage sites.

It localises to the nucleus. The protein localises to the chromosome. It catalyses the reaction DNA(n) + a 2'-deoxyribonucleoside 5'-triphosphate = DNA(n+1) + diphosphate. It carries out the reaction ATP + H2O = ADP + phosphate + H(+). In terms of biological role, low-fidelity DNA polymerase with a helicase activity that promotes microhomology-mediated end-joining (MMEJ), an alternative non-homologous end-joining (NHEJ) machinery required to repair double-strand breaks in DNA during mitosis. MMEJ is an error-prone repair pathway that produces deletions of sequences from the strand being repaired and promotes genomic rearrangements, such as telomere fusions, some of them leading to cellular transformation. MMEJ is required during mitosis to repair persistent double-strand breaks that originate in S-phase. Although error-prone, MMEJ protects against chromosomal instability and tumorigenesis. The polymerase acts by binding directly the 2 ends of resected double-strand breaks, allowing microhomologous sequences in the overhangs to form base pairs. It then extends each strand from the base-paired region using the opposing overhang as a template. Requires partially resected DNA containing 2 to 6 base pairs of microhomology to perform MMEJ. The polymerase lacks proofreading activity and is highly promiscuous: unlike most polymerases, promotes extension of ssDNA and partial ssDNA (pssDNA) substrates. When the ends of a break do not contain terminal microhomology must identify embedded complementary sequences through a scanning step. Also acts as a DNA helicase, promoting dissociation of the replication protein A complex (RPA/RP-A), composed of RPA1, RPA2 and RPA3, from resected double-strand breaks to allow their annealing and subsequent joining by MMEJ. Removal of RPA/RP-A complex proteins prevents RAD51 accumulation at resected ends, thereby inhibiting homology-recombination repair (HR) pathway. Also shows RNA-directed DNA polymerase activity to mediate DNA repair in vitro; however this activity needs additional evidence in vivo. May also have lyase activity. Involved in somatic hypermutation of immunoglobulin genes, a process that requires the activity of DNA polymerases to ultimately introduce mutations at both A/T and C/G base pairs. However, POLQ does not play a major role in somatic hypermutation. POLQ-mediated end joining activity is involved in random integration of exogenous DNA hampers. This Mus musculus (Mouse) protein is DNA polymerase theta.